The sequence spans 559 residues: Potassium-transporting ATPase potassium-binding subunit (559 aa).

The next 12 membrane-spanning stretches (helical) occupy residues 5–25 (GFLLLASYLLVLLVLARPLGM), 63–83 (LLAILLFNALGGLALFALLML), 131–151 (VGLTVQNFLSAATGIAVVFAL), 173–193 (ITLWLLLPLSLLVALFFIQQG), 254–274 (VQMLAIFLIPTALCFAFGEVV), 282–302 (AILWAMTLIFILCVAVVMWAE), 327–347 (FGILASSLFAVITTAASCGAV), 356–376 (ALGGMVPMWLMQIGEVVFGGV), 379–399 (GLYGMLLFVMLAVFIAGLMVG), 416–436 (MIALAILVTPTLVLLGTALAM), 483–503 (LLLAFCMLVGRFAVIIPVMAI), and 525–545 (ALFIGLLIGTVLLVGALTFIP).

Belongs to the KdpA family. In terms of assembly, the system is composed of three essential subunits: KdpA, KdpB and KdpC.

It is found in the cell inner membrane. Its function is as follows. Part of the high-affinity ATP-driven potassium transport (or Kdp) system, which catalyzes the hydrolysis of ATP coupled with the electrogenic transport of potassium into the cytoplasm. This subunit binds the periplasmic potassium ions and delivers the ions to the membrane domain of KdpB through an intramembrane tunnel. This chain is Potassium-transporting ATPase potassium-binding subunit, found in Klebsiella pneumoniae subsp. pneumoniae (strain ATCC 700721 / MGH 78578).